The following is a 416-amino-acid chain: Meiotically up-regulated protein PB1A10.08 (416 aa).

The protein resides in the cytoplasm. In terms of biological role, may have a role in meiosis and sporulation. This is Meiotically up-regulated protein PB1A10.08 from Schizosaccharomyces pombe (strain 972 / ATCC 24843) (Fission yeast).